Here is a 79-residue protein sequence, read N- to C-terminus: Ponericin-W-like 32.1 (79 aa).

An N-terminal signal peptide occupies residues 1–23; that stretch reads MKCKKQLLVIFFAYFLVVNESEA. The propeptide occupies 49 to 79; sequence RALMKRDLEDIMDPYQKNLKLDRYLRRLAMD.

This sequence belongs to the non-disulfide-bridged peptide (NDBP) superfamily. Medium-length antimicrobial peptide (group 3) family. Ponericin-W subfamily. Expressed by the venom gland.

It localises to the secreted. The protein localises to the target cell membrane. In terms of biological role, antimicrobial peptide with potent activity against a range of Gram-positive and Gram-negative bacteria. Has high hemolytic activity against erythrocytes. May act by disrupting the integrity of the bacterial cell membrane. The chain is Ponericin-W-like 32.1 from Lychas mucronatus (Chinese swimming scorpion).